Here is a 297-residue protein sequence, read N- to C-terminus: Putative thiosulfate sulfurtransferase SseA (297 aa).

2 Rhodanese domains span residues 31-138 (GAPG…ETTL) and 168-286 (ILGA…VPIV). Residue Cys245 is the Cysteine persulfide intermediate of the active site. Residue Arg250 participates in substrate binding.

It carries out the reaction thiosulfate + hydrogen cyanide = thiocyanate + sulfite + 2 H(+). The polypeptide is Putative thiosulfate sulfurtransferase SseA (sseA) (Mycobacterium tuberculosis (strain CDC 1551 / Oshkosh)).